The following is a 1153-amino-acid chain: Nitric oxide synthase (1153 aa).

Residue serine 3 coordinates (6R)-L-erythro-5,6,7,8-tetrahydrobiopterin. Residue cysteine 82 coordinates heme b. The L-arginine site is built by glutamine 145, tryptophan 254, and asparagine 264. Phenylalanine 358 lines the (6R)-L-erythro-5,6,7,8-tetrahydrobiopterin pocket. The tract at residues 397–417 (PKRKLGFKALARAVEFSASLM) is calmodulin-binding. The Flavodoxin-like domain maps to 427–610 (CSIFYATETG…SFRAWSEEVF (184 aa)). 556–587 (VFGLGSKAYPYYAAYGKYIYLMLQELGAERLV) provides a ligand contact to FMN. Positions 660–903 (KEVMPLILAE…LRSAPHFHLP (244 aa)) constitute an FAD-binding FR-type domain. FAD is bound by residues 697–708 (YAPGDHVAIFPA) and 836–846 (LQPRYYSISSS). 911 to 929 (IMIGPGSGIAPFRSFWQQR) serves as a coordination point for NADP(+). 11 tandem repeats follow at residues 934–940 (ENTMPSC), 941–947 (ENTMLSC), 948–954 (ETTIPSC), 955–961 (ENSMPSC), 962–968 (ENTMPSC), 969–975 (ENTMPSC), 976–982 (ENTIPSC), 983–989 (ENTIPSC), 990–996 (ENTMPSC), 997–1003 (ENTIPSW), and 1004–1010 (ERTMQPC). Positions 934–1010 (ENTMPSCENT…PSWERTMQPC (77 aa)) are 11 X 7 AA tandem repeats of E-[NTR]-[ST]-[IM]-[PLQ]-[SP]-[CW]. An NADP(+)-binding site is contributed by 1089–1104 (GGHFYVSGDVSMAHDV).

The protein belongs to the NOS family. Heme b is required as a cofactor. The cofactor is FAD. It depends on FMN as a cofactor. Expressed in the central nervous system, in the serotonergic cerebral giant cells. The isoform Long and isoform Short are expressed equally in the CNS.

The catalysed reaction is 2 L-arginine + 3 NADPH + 4 O2 + H(+) = 2 L-citrulline + 2 nitric oxide + 3 NADP(+) + 4 H2O. Its activity is regulated as follows. Stimulated by calcium/calmodulin. Functionally, produces nitric oxide (NO) which is a messenger molecule with diverse functions throughout the body. The chain is Nitric oxide synthase (NOS) from Lymnaea stagnalis (Great pond snail).